We begin with the raw amino-acid sequence, 147 residues long: Hemoglobin subunit beta (147 aa).

Val2 is modified (N-acetylvaline). The 145-residue stretch at 3–147 folds into the Globin domain; sequence HLSAEEKEAV…VANALAHKYH (145 aa). Position 45 is a phosphoserine (Ser45). Lys60 carries the N6-acetyllysine modification. A heme b-binding site is contributed by His64. Lys83 is subject to N6-acetyllysine. His93 serves as a coordination point for heme b. Position 94 is an S-nitrosocysteine (Cys94). N6-acetyllysine is present on Lys145.

It belongs to the globin family. As to quaternary structure, heterotetramer of two alpha chains and two beta chains. Red blood cells.

Functionally, involved in oxygen transport from the lung to the various peripheral tissues. This chain is Hemoglobin subunit beta (HBB), found in Sus scrofa (Pig).